The sequence spans 39 residues: Photosystem II reaction center protein L (39 aa).

A helical membrane pass occupies residues 18–38 (SLYLGLLLVFVTGVLFSSYFF).

Belongs to the PsbL family. As to quaternary structure, PSII is composed of 1 copy each of membrane proteins PsbA, PsbB, PsbC, PsbD, PsbE, PsbF, PsbH, PsbI, PsbJ, PsbK, PsbL, PsbM, PsbT, PsbX, PsbY, PsbZ, Psb30/Ycf12, at least 3 peripheral proteins of the oxygen-evolving complex and a large number of cofactors. It forms dimeric complexes.

The protein resides in the plastid. It localises to the organellar chromatophore thylakoid membrane. Functionally, one of the components of the core complex of photosystem II (PSII). PSII is a light-driven water:plastoquinone oxidoreductase that uses light energy to abstract electrons from H(2)O, generating O(2) and a proton gradient subsequently used for ATP formation. It consists of a core antenna complex that captures photons, and an electron transfer chain that converts photonic excitation into a charge separation. This subunit is found at the monomer-monomer interface and is required for correct PSII assembly and/or dimerization. The polypeptide is Photosystem II reaction center protein L (Paulinella chromatophora).